We begin with the raw amino-acid sequence, 577 residues long: Zinc finger protein 384 (577 aa).

A disordered region spans residues threonine 171–glycine 225. Positions glutamate 175 to serine 185 are enriched in gly residues. Serine 214 bears the Phosphoserine mark. C2H2-type zinc fingers lie at residues tyrosine 228–histidine 250, histidine 256–histidine 278, tyrosine 284–histidine 306, histidine 317–histidine 339, tyrosine 345–histidine 367, tyrosine 373–histidine 397, phenylalanine 403–histidine 425, and tyrosine 433–histidine 455. Over residues glutamine 501 to glutamine 515 the composition is skewed to low complexity. The tract at residues glutamine 501–proline 550 is disordered.

The protein belongs to the krueppel C2H2-type zinc-finger protein family. As to quaternary structure, interacts with BCAR1.

The protein localises to the nucleus. Its function is as follows. Transcription factor that binds the consensus DNA sequence [GC]AAAAA. Seems to bind and regulate the promoters of MMP1, MMP3, MMP7 and COL1A1. The polypeptide is Zinc finger protein 384 (ZNF384) (Homo sapiens (Human)).